The following is a 1257-amino-acid chain: Protein flightless-1 homolog (1257 aa).

LRR repeat units follow at residues 6–31, 32–54, 56–77, 78–102, 103–126, 128–148, 149–172, 174–195, 197–221, 222–244, 246–267, 268–290, 292–315, 316–338, 339–361, and 363–384; these read LQFV…VEQM, TQMT…LSRC, NLEH…LSDL, PRLR…IFRM, KDLT…EYAK, SIVL…VCAN, LIDL…IRRL, MLQS…QLPS, TSLS…LDDM, HNLR…LFKL, NLRK…EGEW, ENLE…VVKL, RLTK…IGKL, IQLT…ISRC, VKLQ…IHLL, and DLKV…PNDA. Gelsolin-like repeat units follow at residues 523–600, 640–714, 759–832, and 1168–1243; these read MDEA…EEFL, AVEM…PEFW, ELPK…MMFR, and EKTV…CRFR.

It belongs to the villin/gelsolin family.

In terms of biological role, may play a key role in embryonic cellularization by interacting with both the cytoskeleton and other cellular components. This chain is Protein flightless-1 homolog (fli-1), found in Caenorhabditis elegans.